Here is a 329-residue protein sequence, read N- to C-terminus: (+)-eremophilene synthase (329 aa).

Residues Asp91 and Glu96 each contribute to the Mg(2+) site. Residues 91–95 (DDAYD) carry the DDXXD motif motif. Arg185 contributes to the substrate binding site. Residues Asn231 and Ser235 each coordinate Mg(2+). Lys238 is a binding site for substrate. Residue Glu239 participates in Mg(2+) binding. Residue 317–318 (RY) coordinates substrate.

Belongs to the terpene synthase family. Mg(2+) is required as a cofactor.

It carries out the reaction (2E,6E)-farnesyl diphosphate = (+)-eremophilene + diphosphate. Its pathway is secondary metabolite biosynthesis; terpenoid biosynthesis. Catalyzes the conversion of (2E,6E)-farnesyl diphosphate (FPP) to yield the bicyclic sesquiterpene eremophilene via a 1,10-cyclization, which requires the abstraction of the pyrophosphate from FPP to yield the (E,E)-germacradienyl cation. The only accepted substrate is farnesyl diphosphate (FPP). In Sorangium cellulosum (strain So ce56) (Polyangium cellulosum (strain So ce56)), this protein is (+)-eremophilene synthase.